The chain runs to 179 residues: Small ribosomal subunit protein uS5 (179 aa).

The S5 DRBM domain maps to 22-85 (MIEKLVAVNR…EYARKTMANV (64 aa)).

This sequence belongs to the universal ribosomal protein uS5 family. Part of the 30S ribosomal subunit. Contacts proteins S4 and S8.

Its function is as follows. With S4 and S12 plays an important role in translational accuracy. Located at the back of the 30S subunit body where it stabilizes the conformation of the head with respect to the body. The polypeptide is Small ribosomal subunit protein uS5 (Xylella fastidiosa (strain 9a5c)).